The following is a 350-amino-acid chain: D-alanine--D-alanine ligase (350 aa).

The 209-residue stretch at 138–346 folds into the ATP-grasp domain; the sequence is KSAFSSAGLS…LEQLVHKLIQ (209 aa). Residue 173-228 coordinates ATP; that stretch reads ERELNYPCFVKPANLGSSVGISKVRSRQELEAGLEQAAALDPRLVVEQGVNAREVE. Mg(2+) contacts are provided by D299, E313, and N315.

Belongs to the D-alanine--D-alanine ligase family. Mg(2+) is required as a cofactor. It depends on Mn(2+) as a cofactor.

It localises to the cytoplasm. The catalysed reaction is 2 D-alanine + ATP = D-alanyl-D-alanine + ADP + phosphate + H(+). It participates in cell wall biogenesis; peptidoglycan biosynthesis. Its function is as follows. Cell wall formation. The polypeptide is D-alanine--D-alanine ligase (Synechococcus sp. (strain CC9605)).